The primary structure comprises 715 residues: 1,4-alpha-glucan branching enzyme GlgB (715 aa).

Aspartate 399 acts as the Nucleophile in catalysis. Glutamate 452 (proton donor) is an active-site residue.

This sequence belongs to the glycosyl hydrolase 13 family. GlgB subfamily. As to quaternary structure, monomer.

The catalysed reaction is Transfers a segment of a (1-&gt;4)-alpha-D-glucan chain to a primary hydroxy group in a similar glucan chain.. It functions in the pathway glycan biosynthesis; glycogen biosynthesis. Functionally, catalyzes the formation of the alpha-1,6-glucosidic linkages in glycogen by scission of a 1,4-alpha-linked oligosaccharide from growing alpha-1,4-glucan chains and the subsequent attachment of the oligosaccharide to the alpha-1,6 position. The chain is 1,4-alpha-glucan branching enzyme GlgB from Rhodopseudomonas palustris (strain BisA53).